Here is a 97-residue protein sequence, read N- to C-terminus: MNNLPATPSPEELMTTPVFQAPETMSPQAEEASTALIAVVITVVFLTLLSVVTLIFFYLYKNKGSYVTYEPAEGEPSAILQMETDSAKGKEKEEYFI.

The Extracellular portion of the chain corresponds to 1 to 36 (MNNLPATPSPEELMTTPVFQAPETMSPQAEEASTAL). O-linked (GalNAc...) threonine glycosylation occurs at Thr-7. A glycan (O-linked (GalNAc...) serine) is linked at Ser-9. Thr-15, Thr-16, and Thr-24 each carry an O-linked (GalNAc...) threonine glycan. O-linked (GalNAc...) serine glycosylation is present at Ser-26. Residues 37–57 (IAVVITVVFLTLLSVVTLIFF) traverse the membrane as a helical; Signal-anchor for type III membrane protein segment. The Cytoplasmic portion of the chain corresponds to 58 to 97 (YLYKNKGSYVTYEPAEGEPSAILQMETDSAKGKEKEEYFI).

Belongs to the SMAGP family. Post-translationally, O-glycosylated. The O-glycan is modified with sialic acid residues. In terms of tissue distribution, detected in brain (at protein level). Highly expressed in kidney and placenta. Detected in skin, breast, heart, lung, liver, prostate, spleen, small intestine, colon and stomach.

It localises to the cell membrane. It is found in the cytoplasmic vesicle membrane. Functionally, may play a role in epithelial cell-cell contacts. May play a role in tumor invasiveness and metastasis formation. The protein is Small cell adhesion glycoprotein (Smagp) of Rattus norvegicus (Rat).